Consider the following 467-residue polypeptide: Programmed cell death protein 4 (467 aa).

Disordered regions lie at residues 21-43 (ALFSGDEENGGSEERKTEINGNW) and 57-124 (KAKR…VWGT). The Nuclear localization signal motif lies at 57 to 63 (KAKRRLR). Residues 112-123 (KKGGAGGKGVWG) are compositionally biased toward gly residues. 2 MI domains span residues 161–282 (AFEK…GYKG) and 324–447 (HLVK…LCPS). The short motif at 446 to 452 (PSRGRKR) is the Nuclear localization signal element.

The protein belongs to the PDCD4 family. As to quaternary structure, interacts with EIF4A. As to expression, expressed in a broad spectrum of hematopoietic organs, such as thymus and bursa. Lower levels of expression detected in the kidney.

It localises to the nucleus. The protein localises to the cytoplasm. Inhibits translation initiation and cap-dependent translation. May excert its function by hindering the interaction between EIF4A and EIF4G. Inhibits the helicase activity of EIF4A. Binds RNA. Does not seem to be involved in apoptosis. The protein is Programmed cell death protein 4 (PDCD4) of Gallus gallus (Chicken).